An 849-amino-acid polypeptide reads, in one-letter code: Protein lap1 (849 aa).

LRR repeat units follow at residues 18–39 (VIDK…WQHE), 41–62 (TLEE…LFYC), 64–85 (GLRV…IGSL), 87–108 (QLQH…IKSC), 110–131 (HLTH…ITSL), 133–155 (SLQE…GRLV), 156–177 (NLRI…MVRL), 179–200 (NLQR…VGEL), 202–224 (SLRE…GKLR), 225–246 (DLQH…LSNW), 248–269 (NVEV…VGML), 271–292 (SLVT…ISYL), 294–315 (QLEE…IGML), 317–338 (SLRF…LCSC), 340–362 (QLSV…GNLS), 363–384 (KMKV…MLNL), and 386–407 (NLTS…QYLD). The segment at 716–752 (NNISNNLEPNPEEEDQELDDTMSQHSLNSTATNNTSK) is disordered. Positions 725–735 (NPEEEDQELDD) are enriched in acidic residues. Over residues 736-752 (TMSQHSLNSTATNNTSK) the composition is skewed to polar residues. Residues 770–849 (VKQVTLKWEN…TVMNIMLSRK (80 aa)) enclose the PDZ domain.

This sequence belongs to the LAP (LRR and PDZ) protein family.

In terms of biological role, may have a role in assembling adherens junctions. The polypeptide is Protein lap1 (Drosophila melanogaster (Fruit fly)).